We begin with the raw amino-acid sequence, 394 residues long: Elongation factor Tu 2 (394 aa).

A tr-type G domain is found at 10–204 (KPHVNVGTIG…HLDTYIPEPE (195 aa)). The G1 stretch occupies residues 19–26 (GHVDHGKT). 19-26 (GHVDHGKT) lines the GTP pocket. Thr-26 is a binding site for Mg(2+). The interval 60-64 (GITIN) is G2. The interval 81–84 (DCPG) is G3. GTP-binding positions include 81–85 (DCPGH) and 136–139 (NKCD). A G4 region spans residues 136–139 (NKCD). A G5 region spans residues 174-176 (SAL).

Belongs to the TRAFAC class translation factor GTPase superfamily. Classic translation factor GTPase family. EF-Tu/EF-1A subfamily. In terms of assembly, monomer.

The protein resides in the cytoplasm. It carries out the reaction GTP + H2O = GDP + phosphate + H(+). Its function is as follows. GTP hydrolase that promotes the GTP-dependent binding of aminoacyl-tRNA to the A-site of ribosomes during protein biosynthesis. In Haemophilus influenzae (strain 86-028NP), this protein is Elongation factor Tu 2.